Reading from the N-terminus, the 457-residue chain is Gustatory and odorant receptor 24 (457 aa).

At 1–115 (MSLYFNADTM…GGTAFVLASP (115 aa)) the chain is on the cytoplasmic side. A helical membrane pass occupies residues 116 to 136 (SMTYCVLFFLLLTVYIAFILL). Topologically, residues 137–152 (NRIEIVRTLEGRFEES) are extracellular. The helical transmembrane segment at 153-173 (VIAYLFIVNILPILIIPLMWY) threads the bilayer. Over 174 to 209 (ESRKVVSVVNGWVDFETVYRETTGRALELRLRTKAQ) the chain is Cytoplasmic. The helical transmembrane segment at 210–230 (VIAILLPILCSLSVAITHVTM) threads the bilayer. Residues 231-237 (VDFKLLQ) lie on the Extracellular side of the membrane. Residues 238–258 (VIPYCVLDTITYMMGGYWYMA) form a helical membrane-spanning segment. The Cytoplasmic segment spans residues 259–309 (CETLSITAKILAEDFQRALRHVGPAAKVSEYRSLWLRLSKLARDTGFSTCY). Residues 310–330 (TFTFICLYLFFIITLSIYGLM) form a helical membrane-spanning segment. Residues 331–341 (SQISDGFGVKD) are Extracellular-facing. Residues 342 to 362 (IGLAVTAFCSVGLLFYICDEA) traverse the membrane as a helical segment. Residues 363-421 (HYASFNVRTNFQKKLLMVELSWMNTDAQTEINMFLRATEMNPSSINLGGFFDVNRTLFK) are Cytoplasmic-facing. A helical membrane pass occupies residues 422-442 (SLLATMVTYLVVLLQFQISIP). The Extracellular segment spans residues 443–457 (DEPSAMLMHSNSSHS). The N-linked (GlcNAc...) asparagine glycan is linked to N453.

The protein belongs to the insect chemoreceptor superfamily. Gustatory receptor (GR) family. Gr21a subfamily. In terms of tissue distribution, carbon dioxide-responsive neurons coexpress GPRgr22 and GPRgr24 in the maxillary palp, at both larval and adult life stages.

It localises to the cell membrane. Its function is as follows. Gustatory receptor which mediates acceptance or avoidance behavior, depending on its substrates. GPRgr22 and GPRgr24 together are sufficient for olfactory carbon dioxide-chemosensation. This is Gustatory and odorant receptor 24 from Anopheles gambiae (African malaria mosquito).